The sequence spans 309 residues: Thermolabile glutaminase (309 aa).

7 residues coordinate substrate: Ser64, Asn114, Glu160, Asn167, Tyr191, Tyr243, and Val261.

The protein belongs to the glutaminase family. In terms of assembly, homotetramer.

It catalyses the reaction L-glutamine + H2O = L-glutamate + NH4(+). This chain is Thermolabile glutaminase (glsA), found in Rhizobium etli (strain ATCC 51251 / DSM 11541 / JCM 21823 / NBRC 15573 / CFN 42).